We begin with the raw amino-acid sequence, 308 residues long: Tetraacyldisaccharide 4'-kinase (308 aa).

ATP is bound at residue 63 to 70; sequence SFGGNGKT.

Belongs to the LpxK family.

The catalysed reaction is a lipid A disaccharide + ATP = a lipid IVA + ADP + H(+). Its pathway is glycolipid biosynthesis; lipid IV(A) biosynthesis; lipid IV(A) from (3R)-3-hydroxytetradecanoyl-[acyl-carrier-protein] and UDP-N-acetyl-alpha-D-glucosamine: step 6/6. Functionally, transfers the gamma-phosphate of ATP to the 4'-position of a tetraacyldisaccharide 1-phosphate intermediate (termed DS-1-P) to form tetraacyldisaccharide 1,4'-bis-phosphate (lipid IVA). This chain is Tetraacyldisaccharide 4'-kinase, found in Campylobacter jejuni subsp. jejuni serotype O:6 (strain 81116 / NCTC 11828).